The chain runs to 80 residues: Translation initiation factor IF-1, chloroplastic (80 aa).

An S1-like domain is found at 1–74 (MKEQKWIHEG…TRGRIIYRLR (74 aa)).

This sequence belongs to the IF-1 family. Component of the 30S ribosomal translation pre-initiation complex which assembles on the 30S ribosome in the order IF-2 and IF-3, IF-1 and N-formylmethionyl-tRNA(fMet); mRNA recruitment can occur at any time during PIC assembly.

It is found in the plastid. It localises to the chloroplast. Its function is as follows. One of the essential components for the initiation of protein synthesis. Stabilizes the binding of IF-2 and IF-3 on the 30S subunit to which N-formylmethionyl-tRNA(fMet) subsequently binds. Helps modulate mRNA selection, yielding the 30S pre-initiation complex (PIC). Upon addition of the 50S ribosomal subunit IF-1, IF-2 and IF-3 are released leaving the mature 70S translation initiation complex. This Illicium oligandrum (Star anise) protein is Translation initiation factor IF-1, chloroplastic.